The following is a 254-amino-acid chain: Ribonuclease HII (254 aa).

Positions 70–254 (QAIAGIDEVG…TFEPVKSMLG (185 aa)) constitute an RNase H type-2 domain. Aspartate 76, glutamate 77, and aspartate 168 together coordinate a divalent metal cation.

Belongs to the RNase HII family. It depends on Mn(2+) as a cofactor. Requires Mg(2+) as cofactor.

Its subcellular location is the cytoplasm. It catalyses the reaction Endonucleolytic cleavage to 5'-phosphomonoester.. Its function is as follows. Endonuclease that specifically degrades the RNA of RNA-DNA hybrids. This chain is Ribonuclease HII, found in Streptococcus gordonii (strain Challis / ATCC 35105 / BCRC 15272 / CH1 / DL1 / V288).